The sequence spans 263 residues: Small ribosomal subunit protein eS1 (263 aa).

Residues 235–263 are disordered; it reads HGEGGGGKGEAGDKSERPEGYEPPVQESV. Over residues 244-254 the composition is skewed to basic and acidic residues; the sequence is EAGDKSERPEG.

Belongs to the eukaryotic ribosomal protein eS1 family. As to quaternary structure, component of the small ribosomal subunit. Mature ribosomes consist of a small (40S) and a large (60S) subunit. The 40S subunit contains about 33 different proteins and 1 molecule of RNA (18S). The 60S subunit contains about 49 different proteins and 3 molecules of RNA (28S, 5.8S and 5S).

The protein localises to the cytoplasm. The sequence is that of Small ribosomal subunit protein eS1 from Bombyx mori (Silk moth).